Reading from the N-terminus, the 360-residue chain is NAD(P)H-quinone oxidoreductase subunit 1, chloroplastic (360 aa).

8 consecutive transmembrane segments (helical) span residues 30–50 (FLPI…LVWL), 98–118 (FSIG…VIPF), 127–147 (FNIG…GLLM), 165–185 (AAQS…ISLL), 203–223 (FWGW…ISSL), 248–268 (YSGI…LISS), 297–317 (IFGT…FLFI), and 340–360 (FLLP…VFSL).

Belongs to the complex I subunit 1 family. As to quaternary structure, NDH is composed of at least 16 different subunits, 5 of which are encoded in the nucleus.

It localises to the plastid. The protein localises to the chloroplast thylakoid membrane. It catalyses the reaction a plastoquinone + NADH + (n+1) H(+)(in) = a plastoquinol + NAD(+) + n H(+)(out). The catalysed reaction is a plastoquinone + NADPH + (n+1) H(+)(in) = a plastoquinol + NADP(+) + n H(+)(out). NDH shuttles electrons from NAD(P)H:plastoquinone, via FMN and iron-sulfur (Fe-S) centers, to quinones in the photosynthetic chain and possibly in a chloroplast respiratory chain. The immediate electron acceptor for the enzyme in this species is believed to be plastoquinone. Couples the redox reaction to proton translocation, and thus conserves the redox energy in a proton gradient. The sequence is that of NAD(P)H-quinone oxidoreductase subunit 1, chloroplastic from Aethionema grandiflorum (Persian stone-cress).